Here is a 44-residue protein sequence, read N- to C-terminus: Photosystem I reaction center subunit IX (44 aa).

Residues 9 to 29 (YMRSAPVVAAAWITMTAGIII) form a helical membrane-spanning segment.

Belongs to the PsaJ family.

The protein resides in the cellular thylakoid membrane. Its function is as follows. May help in the organization of the PsaE and PsaF subunits. This Prochlorococcus marinus (strain MIT 9312) protein is Photosystem I reaction center subunit IX.